We begin with the raw amino-acid sequence, 351 residues long: Cobalt-precorrin-5B C(1)-methyltransferase (351 aa).

It belongs to the CbiD family.

The catalysed reaction is Co-precorrin-5B + S-adenosyl-L-methionine = Co-precorrin-6A + S-adenosyl-L-homocysteine. It functions in the pathway cofactor biosynthesis; adenosylcobalamin biosynthesis; cob(II)yrinate a,c-diamide from sirohydrochlorin (anaerobic route): step 6/10. Its function is as follows. Catalyzes the methylation of C-1 in cobalt-precorrin-5B to form cobalt-precorrin-6A. In Thermosipho africanus (strain TCF52B), this protein is Cobalt-precorrin-5B C(1)-methyltransferase.